Consider the following 968-residue polypeptide: MSERHAALTSLPPILPRLIRRFAVVIVLLWLGFTAFVNLAVPQLEVVGKAHSVSMSPSDAASIQAIKRVGQVFGEFDSDNAVTIVLEGDQPLGGDAHRFYSDLMRKLSADTRHVAHIQDFWGDPLTAAGSQSADDRAAYVVVYLVGNNETEAYDSVHAVRHMVDTTPPPHGVKAYVTGPAALNADQAEAGDKSIAKVTAITSMVIAAMLLVIYRSVITAVLVLIMVGIDLGAIRGFIALLADHNIFSLSTFATNLLVLMAIAASTDYAIFMLGRYHESRYAGEDRETAFYTMFHGTAHVILGSGLTIAGAMYCLSFARLPYFETLGAPIAIGMLVAVLAALTLGPAVLTVGSFFKLFDPKRRMNTRRWRRVGTAIVRWPGPVLAATCLVASIGLLALPSYRTTYDLRKFMPASMPSNVGDAAAGRHFSRARLNPEVLLIETDHDMRNPVDMLVLDKVAKNIYHSPGIEQVKAITRPLGTTIKHTSIPFIISMQGVNSSEQMEFMKDRIDDILVQVAAMNTSIETMHRMYALMGEVIDNTVDMDHLTHDMSDITATLRDHLADFEDFFRPIRSYFYWEKHCFDVPLCWSIRSIFDMFDSVDQLSEKLEYLVKDMDILITLLPQMRAQMPPMISAMTTMRDMMLIWHGTLGAFYKQQARNNKDPGAMGRVFDAAQIDDSFYLPQSAFENPDFKRGLKMFLSPDGKAARFVIALEGDPATPEGISRVEPIKREAREAIKGTPLQGAAIYLGGTAATFKDIREGARYDLLIAGVAAISLILIIMMIITRSVVAAVVIVGTVVLSMGASFGLSVLVWQDILGIELYWMVLAMSVILLLAVGSDYNLLLISRLKEEIGAGLNTGIIRAMAGTGGVVTAAGMVFAVTMSLFVFSDLRIIGQIGTTIGLGLLFDTLVVRSFMTPSIAALLGRWFWWPLRVRPRPASQMLRPFAPRRLVRALLLPSGQHPSATGAHE.

The next 11 membrane-spanning stretches (helical) occupy residues 22 to 42, 204 to 224, 245 to 265, 297 to 317, 328 to 348, 378 to 398, 763 to 783, 787 to 807, 815 to 835, 866 to 886, and 890 to 910; these read FAVV…LAVP, VIAA…LVLI, IFSL…AAST, AHVI…LSFA, PIAI…PAVL, WPGP…LALP, YDLL…MMII, VVAA…SFGL, ILGI…LLAV, TGGV…LFVF, and RIIG…TLVV.

This sequence belongs to the resistance-nodulation-cell division (RND) (TC 2.A.6) family. MmpL subfamily.

Its subcellular location is the cell membrane. This chain is Probable transport protein MmpL2 (mmpL2), found in Mycobacterium tuberculosis (strain CDC 1551 / Oshkosh).